The primary structure comprises 241 residues: Uridylate kinase (241 aa).

Position 14–17 (14–17) interacts with ATP; the sequence is KLSG. Residues 22–27 form an involved in allosteric activation by GTP region; sequence GGLGMG. Glycine 56 serves as a coordination point for UMP. ATP contacts are provided by glycine 57 and arginine 61. UMP-binding positions include aspartate 77 and 138-145; that span reads TGNPFFTT. Residues threonine 165, tyrosine 171, and aspartate 174 each coordinate ATP.

The protein belongs to the UMP kinase family. As to quaternary structure, homohexamer.

The protein resides in the cytoplasm. It carries out the reaction UMP + ATP = UDP + ADP. It participates in pyrimidine metabolism; CTP biosynthesis via de novo pathway; UDP from UMP (UMPK route): step 1/1. Its activity is regulated as follows. Allosterically activated by GTP. Inhibited by UTP. In terms of biological role, catalyzes the reversible phosphorylation of UMP to UDP. This Psychrobacter sp. (strain PRwf-1) protein is Uridylate kinase.